The chain runs to 377 residues: Chaperone protein DnaJ (377 aa).

Residues 5 to 70 enclose the J domain; that stretch reads DYYEVLGLQK…QKRAAYDQYG (66 aa). Residues 134-212 form a CR-type zinc finger; the sequence is GCKKDIRLST…CHGDGRVQKA (79 aa). Positions 147, 150, 164, 167, 186, 189, 200, and 203 each coordinate Zn(2+). 4 CXXCXGXG motif repeats span residues 147–154, 164–171, 186–193, and 200–207; these read CDNCHGTG, CPHCHGAG, CPSCHGTG, and CHSCHGDG.

It belongs to the DnaJ family. As to quaternary structure, homodimer. Requires Zn(2+) as cofactor.

The protein localises to the cytoplasm. Participates actively in the response to hyperosmotic and heat shock by preventing the aggregation of stress-denatured proteins and by disaggregating proteins, also in an autonomous, DnaK-independent fashion. Unfolded proteins bind initially to DnaJ; upon interaction with the DnaJ-bound protein, DnaK hydrolyzes its bound ATP, resulting in the formation of a stable complex. GrpE releases ADP from DnaK; ATP binding to DnaK triggers the release of the substrate protein, thus completing the reaction cycle. Several rounds of ATP-dependent interactions between DnaJ, DnaK and GrpE are required for fully efficient folding. Also involved, together with DnaK and GrpE, in the DNA replication of plasmids through activation of initiation proteins. The protein is Chaperone protein DnaJ of Haemophilus ducreyi (strain 35000HP / ATCC 700724).